Reading from the N-terminus, the 426-residue chain is Histidine--tRNA ligase (426 aa).

This sequence belongs to the class-II aminoacyl-tRNA synthetase family. As to quaternary structure, homodimer.

The protein resides in the cytoplasm. It carries out the reaction tRNA(His) + L-histidine + ATP = L-histidyl-tRNA(His) + AMP + diphosphate + H(+). The protein is Histidine--tRNA ligase of Pseudoalteromonas atlantica (strain T6c / ATCC BAA-1087).